The following is a 522-amino-acid chain: DNA damage-binding protein cmr1 (522 aa).

The span at valine 34–glutamine 47 shows a compositional bias: polar residues. Disordered regions lie at residues valine 34–alanine 89 and glutamine 217–leucine 239. Positions lysine 49–valine 59 are enriched in basic residues. A WD 1 repeat occupies leucine 182–valine 223. Acidic residues predominate over residues glutamate 226–aspartate 236. 6 WD repeats span residues proline 244–arginine 284, valine 294–valine 331, leucine 336–proline 376, glutamate 381–lysine 422, glycine 445–leucine 488, and aspartate 491–methionine 522.

This sequence belongs to the WD repeat DDB2/WDR76 family.

Functionally, DNA-binding protein that binds to both single- and double-stranded DNA. Binds preferentially to UV-damaged DNA. May be involved in DNA-metabolic processes. The chain is DNA damage-binding protein cmr1 from Aspergillus oryzae (strain ATCC 42149 / RIB 40) (Yellow koji mold).